Here is a 125-residue protein sequence, read N- to C-terminus: MRHRKSGRHLNRTSSHRKAMFKNMAASLFEHEVIKTTLPKAKELRRVAEPLITLAKVDSVANRRLAFARTRSKDAVGKLFSELGPRYQARPGGYVRILKCGFRSGDNAPMAYVELVDRPVAEAAE.

Belongs to the bacterial ribosomal protein bL17 family. As to quaternary structure, part of the 50S ribosomal subunit. Contacts protein L32.

This is Large ribosomal subunit protein bL17 from Marinomonas sp. (strain MWYL1).